Reading from the N-terminus, the 226-residue chain is Elongation factor G (226 aa).

This sequence belongs to the GTP-binding elongation factor family. EF-G/EF-2 subfamily.

Its subcellular location is the cytoplasm. Its function is as follows. Catalyzes the GTP-dependent ribosomal translocation step during translation elongation. During this step, the ribosome changes from the pre-translocational (PRE) to the post-translocational (POST) state as the newly formed A-site-bound peptidyl-tRNA and P-site-bound deacylated tRNA move to the P and E sites, respectively. Catalyzes the coordinated movement of the two tRNA molecules, the mRNA and conformational changes in the ribosome. This Neisseria gonorrhoeae protein is Elongation factor G (fusA).